The chain runs to 768 residues: Cullin-3 (768 aa).

A disordered region spans residues 677–698 (VAAKQGESDPERKETRQKVDDD). The segment covering 682-698 (GESDPERKETRQKVDDD) has biased composition (basic and acidic residues). The region spanning 698–760 (DRKHEIEAAI…REYLARTPED (63 aa)) is the Cullin neddylation domain. Residue Lys712 forms a Glycyl lysine isopeptide (Lys-Gly) (interchain with G-Cter in NEDD8) linkage.

Belongs to the cullin family. Component of multiple BCR (BTB-CUL3-RBX1) E3 ubiquitin-protein ligase complexes formed of cul3, rbx1 and a variable BTB domain-containing protein acting as both, adapter to cullin and substrate recognition subunit. Interacts with btbd6. Post-translationally, neddylated. Attachment of NEDD8 is required for the E3 ubiquitin-protein ligase activity of the SCF-like complex.

The protein localises to the nucleus. Its pathway is protein modification; protein ubiquitination. Functionally, probable core component of cullin-based SCF-like E3 ubiquitin-protein ligase complexes which mediate the ubiquitination and subsequent proteasomal degradation of target proteins. The E3 ubiquitin-protein ligase activity of the complex is dependent on the neddylation of the cullin subunit. Involved in ER-Golgi transport by regulating the size of COPII coats, thereby playing a key role in collagen export, which is required for embryonic stem (ES) cells division. May play a role in the regulation of mittotic entry via ubiquitination of aurka. This chain is Cullin-3 (cul3), found in Xenopus tropicalis (Western clawed frog).